The chain runs to 344 residues: Transcription factor HHO3 (344 aa).

Disordered stretches follow at residues 90–122 (KWSS…DKKK) and 156–212 (AFQP…KQRR). Over residues 97–106 (DETDKDEEAE) the composition is skewed to acidic residues. Residues 178–188 (TPTSTTTTSST) show a composition bias toward low complexity. The region spanning 206 to 266 (SNRKQRRCWS…HLQKYRLHTR (61 aa)) is the HTH myb-type domain. The H-T-H motif DNA-binding region spans 237–262 (PKQIRDLMKVDGLTNDEVKSHLQKYR). The segment at 306 to 344 (PVATQPPQSSTSGERSNRGCKSPATSSTTTHTPHLLPLS) is disordered. A compositionally biased stretch (polar residues) spans 310-319 (QPPQSSTSGE). The segment covering 330–344 (TSSTTTHTPHLLPLS) has biased composition (low complexity).

It is found in the nucleus. Probable transcription factor involved in phosphate signaling in roots. This chain is Transcription factor HHO3, found in Arabidopsis thaliana (Mouse-ear cress).